A 419-amino-acid polypeptide reads, in one-letter code: Isocitrate dehydrogenase [NADP] (419 aa).

An NADP(+)-binding site is contributed by Thr102. Residues Ser111, Asn113, Arg117, Arg127, and Arg151 each contribute to the D-threo-isocitrate site. Asp306 is a Mg(2+) binding site. NADP(+)-binding positions include 338 to 344, Asn351, Tyr390, and Arg394; that span reads HGSAPKY.

It belongs to the isocitrate and isopropylmalate dehydrogenases family. Homodimer. Requires Mg(2+) as cofactor. The cofactor is Mn(2+).

It carries out the reaction D-threo-isocitrate + NADP(+) = 2-oxoglutarate + CO2 + NADPH. In terms of biological role, catalyzes the oxidative decarboxylation of isocitrate to 2-oxoglutarate and carbon dioxide with the concomitant reduction of NADP(+). This chain is Isocitrate dehydrogenase [NADP], found in Haloferax volcanii (strain ATCC 29605 / DSM 3757 / JCM 8879 / NBRC 14742 / NCIMB 2012 / VKM B-1768 / DS2) (Halobacterium volcanii).